The chain runs to 327 residues: Endo-1,4-beta-xylanase C (327 aa).

A signal peptide spans 1-15 (MKFSSLLFTASLVAA). The GH10 domain maps to 43–325 (TITDPNLLQS…KPAYTAVVNA (283 aa)). E154 serves as the catalytic Proton donor. E262 (nucleophile) is an active-site residue. C280 and C286 are oxidised to a cystine.

The protein belongs to the glycosyl hydrolase 10 (cellulase F) family.

It is found in the secreted. The catalysed reaction is Endohydrolysis of (1-&gt;4)-beta-D-xylosidic linkages in xylans.. It participates in glycan degradation; xylan degradation. Its activity is regulated as follows. Weakly inhibited by the wheat xylanase inhibiting protein I (XIP-I). Endo-1,4-beta-xylanase involved in the hydrolysis of xylan, a major structural heterogeneous polysaccharide found in plant biomass representing the second most abundant polysaccharide in the biosphere, after cellulose. Plays an important role in causing fusarium head blight (FHB) on cereal crops. The polypeptide is Endo-1,4-beta-xylanase C (XYLC) (Gibberella zeae (strain ATCC MYA-4620 / CBS 123657 / FGSC 9075 / NRRL 31084 / PH-1) (Wheat head blight fungus)).